Here is a 237-residue protein sequence, read N- to C-terminus: MNVLTFLIAAAVSLAVVQADVISHDAVVPFAQPTATTTEQKAGVKFKPQIHISNGCHPYPAVDANGNTSGGLKPTGSSSAGCKGSGYGSQVYGRVATYNGVYAIMYSWYFPKDSPVTGLGHRHDWEHVVVWVDDIKLDSPSIIAVSPSAHSGYNIYYPPESNTIDGYSAKVDYSSSWVVINHALDSTTDAGETQDLIMWDQLTDAARTALENTDFGDANVPMKDGNFLTKVGNAYYA.

Residues 1-19 (MNVLTFLIAAAVSLAVVQA) form the signal peptide. Asn-67 is a glycosylation site (N-linked (GlcNAc...) asparagine). The short motif at 103-113 (AIMYSWYFPKD) is the Conserved undecapeptide motif element. Residues 120 to 126 (GHRHDWE) carry the Conserved heptapetpide motif motif.

The protein belongs to the Necrosis inducing protein (NPP1) family.

It is found in the secreted. In terms of biological role, secreted effector that acts as a pathogen-associated molecular pattern (PAMP) recognized by the plant immune system. Induces necrotic cell death and ethylene biosynthesis in parsley. Stimulates early induced host cellular responses implicated in elicitor signal transmission such as increased levels of cytoplasmic calcium, production of reactive oxygen species (ROS), and MAP kinase activation. Infiltration of NPP1 into leaves of Arabidopsis thaliana results in transcript accumulation of pathogenesis-related (PR) genes, production of ROS and ethylene, callose apposition, and hypersensitive response (HR)-like cell death. NPP1-mediated induction of the PR1 gene is salicylic acid-dependent, and requires both functional NDR1 and PAD4. The chain is Necrosis-inducing protein NPP1 from Phytophthora nicotianae (Potato buckeye rot agent).